Here is a 68-residue protein sequence, read N- to C-terminus: Small ribosomal subunit protein bS21 (68 aa).

The interval 39–68 (PPSVKRVRKKQESERRHRKERAMRRRMMEE) is disordered. The span at 54 to 68 (RHRKERAMRRRMMEE) shows a compositional bias: basic residues.

Belongs to the bacterial ribosomal protein bS21 family.

The polypeptide is Small ribosomal subunit protein bS21 (Orientia tsutsugamushi (strain Ikeda) (Rickettsia tsutsugamushi)).